Reading from the N-terminus, the 571-residue chain is RUN and FYVE domain-containing protein 4 (571 aa).

One can recognise an RUN domain in the interval T33–P166. Positions M174–G207 are disordered. Polar residues predominate over residues S178 to G188. Positions E408–E481 form a coiled coil. The FYVE-type zinc finger occupies R474–E567. Zn(2+)-binding residues include C521, C524, C537, C540, C545, C548, C559, and C562.

As to quaternary structure, forms homodimers (via coiled coil domain). Interacts with RAB7A. Forms a ternary complex with RAB7A and LAMP2; the interaction with RAB7A is mediated by RUFY4 (via RUN and coiled coil domains). Interacts with GTP-, but not GDP-bound ARL8A and ARL8B. Interacts with dynactin/DCTN1 and the dynein intermediate chain DYNC1I1/2.

The protein localises to the cytoplasmic vesicle. It localises to the autophagosome. It is found in the lysosome. Its function is as follows. ARL8 effector that promotes the coupling of endolysosomes to dynein-dynactin for retrograde transport along microtubules. Acts by binding both GTP-bound ARL8 and dynein-dynactin. In nonneuronal cells, promotes concentration of endolysosomes in the juxtanuclear area. In hippocampal neurons, drives retrograde transport of endolysosomes from the axon to the soma. Positive regulator of macroautophagy in dendritic cells. Increases autophagic flux, probably by stimulating both autophagosome formation and facilitating tethering with lysosomes. Binds to phosphatidylinositol 3-phosphate (PtdIns3P) through its FYVE-type zinc finger. Positive regulator of osteosclast bone-resorbing activity, possibly by promoting late endosome-lysosome fusion by acting as an adapter protein between RAB7A on late endosomes and LAMP2 on primary lysosomes. The sequence is that of RUN and FYVE domain-containing protein 4 (RUFY4) from Homo sapiens (Human).